Reading from the N-terminus, the 138-residue chain is ATP synthase epsilon chain (138 aa).

It belongs to the ATPase epsilon chain family. As to quaternary structure, F-type ATPases have 2 components, CF(1) - the catalytic core - and CF(0) - the membrane proton channel. CF(1) has five subunits: alpha(3), beta(3), gamma(1), delta(1), epsilon(1). CF(0) has three main subunits: a, b and c.

It is found in the cell inner membrane. Produces ATP from ADP in the presence of a proton gradient across the membrane. The chain is ATP synthase epsilon chain from Psychrobacter cryohalolentis (strain ATCC BAA-1226 / DSM 17306 / VKM B-2378 / K5).